Reading from the N-terminus, the 276-residue chain is Glutathione S-transferase-like protein ustS (276 aa).

A GST N-terminal domain is found at 16–109; the sequence is STLPGTSKSW…HLDETYPDPP (94 aa).

This sequence belongs to the GST superfamily.

The protein operates within mycotoxin biosynthesis. Glutathione S-transferase-like protein; part of the gene cluster that mediates the biosynthesis of the secondary metabolite ustiloxin B, an antimitotic tetrapeptide. First, ustA is processed by the subtilisin-like endoprotease Kex2 that is outside the ustiloxin B gene cluster, at the C-terminal side of Arg-Lys, after transfer to Golgi apparatus through the endoplasmic reticulum (ER). Cleavage by KEX2 generates 16 peptides YAIG-I to YAIG-XVI. To process the precursor peptide further, at least two peptidases are necessary to cleave the N-terminal and C-terminal sides of the Tyr-Ala-Ile-Gly core peptide which serves as backbone for the synthesis of ustiloxin B, through cyclization and modification of the tyrosine with a non-protein coding amino acid, norvaline. One of the two peptidases must be the serine peptidase ustP; and the other pepdidase is probably ustH. Macrocyclization of the core peptide derived from ustA requires the tyrosinase ustQ, as well as the homologous oxidases ustYa and ustYb, and leads to the production of the first cyclization product N-desmethylustiloxin F. For the formation of N-desmethylustiloxin F, three oxidation steps are required, hydroxylation at the benzylic position, hydroxylation at either the aromatic ring of Tyr or beta-position of Ile, and oxidative cyclization. UstQ may catalyze the oxidation of a phenol moiety, whereas the ustYa and ustYb are most likely responsible for the remaining two-step oxidations. N-desmethylustiloxin F is then methylated by ustM to yield ustiloxin F which in turn substrate of the cytochrome P450 monooxygenase ustC which catalyzes the formation of S-deoxyustiloxin H. The flavoprotein monooxygenases ustF1 and ustF2 then participate in the modification of the side chain of S-deoxyustiloxin H, leading to the synthesis of an oxime intermediate, via ustiloxin H. Finally, carboxylative dehydration performed by the cysteine desulfurase-like protein ustD yields ustiloxin B. This chain is Glutathione S-transferase-like protein ustS, found in Aspergillus flavus (strain ATCC 200026 / FGSC A1120 / IAM 13836 / NRRL 3357 / JCM 12722 / SRRC 167).